Consider the following 515-residue polypeptide: Bifunctional purine biosynthesis protein PurH (515 aa).

The region spanning 1–145 (MTKRVLISVS…KNHASVTVVV (145 aa)) is the MGS-like domain.

It belongs to the PurH family.

The catalysed reaction is (6R)-10-formyltetrahydrofolate + 5-amino-1-(5-phospho-beta-D-ribosyl)imidazole-4-carboxamide = 5-formamido-1-(5-phospho-D-ribosyl)imidazole-4-carboxamide + (6S)-5,6,7,8-tetrahydrofolate. It catalyses the reaction IMP + H2O = 5-formamido-1-(5-phospho-D-ribosyl)imidazole-4-carboxamide. It functions in the pathway purine metabolism; IMP biosynthesis via de novo pathway; 5-formamido-1-(5-phospho-D-ribosyl)imidazole-4-carboxamide from 5-amino-1-(5-phospho-D-ribosyl)imidazole-4-carboxamide (10-formyl THF route): step 1/1. Its pathway is purine metabolism; IMP biosynthesis via de novo pathway; IMP from 5-formamido-1-(5-phospho-D-ribosyl)imidazole-4-carboxamide: step 1/1. In Streptococcus pneumoniae serotype 19F (strain G54), this protein is Bifunctional purine biosynthesis protein PurH.